The primary structure comprises 565 residues: NAD-dependent malic enzyme (565 aa).

Catalysis depends on Tyr-104, which acts as the Proton donor. Arg-157 contributes to the NAD(+) binding site. The active-site Proton acceptor is the Lys-175. Residues Glu-246, Asp-247, and Asp-270 each contribute to the a divalent metal cation site. Residues Asp-270 and Asn-418 each coordinate NAD(+).

It belongs to the malic enzymes family. In terms of assembly, homotetramer. The cofactor is Mg(2+). Mn(2+) is required as a cofactor.

It catalyses the reaction (S)-malate + NAD(+) = pyruvate + CO2 + NADH. The catalysed reaction is oxaloacetate + H(+) = pyruvate + CO2. The protein is NAD-dependent malic enzyme of Salmonella newport (strain SL254).